The sequence spans 401 residues: Argininosuccinate synthase (401 aa).

8–16 serves as a coordination point for ATP; the sequence is AYSGGLDTS. Y85 serves as a coordination point for L-citrulline. G115 lines the ATP pocket. Positions 117, 121, and 122 each coordinate L-aspartate. N121 is an L-citrulline binding site. Positions 125, 173, 258, and 270 each coordinate L-citrulline.

The protein belongs to the argininosuccinate synthase family. Type 1 subfamily. As to quaternary structure, homotetramer.

It is found in the cytoplasm. The enzyme catalyses L-citrulline + L-aspartate + ATP = 2-(N(omega)-L-arginino)succinate + AMP + diphosphate + H(+). The protein operates within amino-acid biosynthesis; L-arginine biosynthesis; L-arginine from L-ornithine and carbamoyl phosphate: step 2/3. This is Argininosuccinate synthase from Staphylococcus aureus (strain bovine RF122 / ET3-1).